Here is a 331-residue protein sequence, read N- to C-terminus: Holliday junction branch migration complex subunit RuvB (331 aa).

Residues 1–171 (MTEPLDAALR…FGIIEHLEYY (171 aa)) form a large ATPase domain (RuvB-L) region. Residues Leu-9, Arg-10, Gly-51, Lys-54, Thr-55, Thr-56, 118 to 120 (EDF), Arg-161, Tyr-171, and Arg-208 contribute to the ATP site. Mg(2+) is bound at residue Thr-55. Positions 172-242 (TPEEIGTNLL…RAQDALDKLG (71 aa)) are small ATPAse domain (RuvB-S). A head domain (RuvB-H) region spans residues 245 to 331 (TAGLDERDKK…AESDLGLYTN (87 aa)). DNA-binding residues include Arg-300 and Arg-305.

The protein belongs to the RuvB family. Homohexamer. Forms an RuvA(8)-RuvB(12)-Holliday junction (HJ) complex. HJ DNA is sandwiched between 2 RuvA tetramers; dsDNA enters through RuvA and exits via RuvB. An RuvB hexamer assembles on each DNA strand where it exits the tetramer. Each RuvB hexamer is contacted by two RuvA subunits (via domain III) on 2 adjacent RuvB subunits; this complex drives branch migration. In the full resolvosome a probable DNA-RuvA(4)-RuvB(12)-RuvC(2) complex forms which resolves the HJ.

The protein localises to the cytoplasm. It carries out the reaction ATP + H2O = ADP + phosphate + H(+). In terms of biological role, the RuvA-RuvB-RuvC complex processes Holliday junction (HJ) DNA during genetic recombination and DNA repair, while the RuvA-RuvB complex plays an important role in the rescue of blocked DNA replication forks via replication fork reversal (RFR). RuvA specifically binds to HJ cruciform DNA, conferring on it an open structure. The RuvB hexamer acts as an ATP-dependent pump, pulling dsDNA into and through the RuvAB complex. RuvB forms 2 homohexamers on either side of HJ DNA bound by 1 or 2 RuvA tetramers; 4 subunits per hexamer contact DNA at a time. Coordinated motions by a converter formed by DNA-disengaged RuvB subunits stimulates ATP hydrolysis and nucleotide exchange. Immobilization of the converter enables RuvB to convert the ATP-contained energy into a lever motion, pulling 2 nucleotides of DNA out of the RuvA tetramer per ATP hydrolyzed, thus driving DNA branch migration. The RuvB motors rotate together with the DNA substrate, which together with the progressing nucleotide cycle form the mechanistic basis for DNA recombination by continuous HJ branch migration. Branch migration allows RuvC to scan DNA until it finds its consensus sequence, where it cleaves and resolves cruciform DNA. The sequence is that of Holliday junction branch migration complex subunit RuvB from Deinococcus geothermalis (strain DSM 11300 / CIP 105573 / AG-3a).